The sequence spans 876 residues: Alanine--tRNA ligase (876 aa).

Lys-74 carries the post-translational modification N6-acetyllysine. Zn(2+) contacts are provided by His-564, His-568, Cys-666, and His-670.

Belongs to the class-II aminoacyl-tRNA synthetase family. Homotetramer. Zn(2+) is required as a cofactor.

Its subcellular location is the cytoplasm. It carries out the reaction tRNA(Ala) + L-alanine + ATP = L-alanyl-tRNA(Ala) + AMP + diphosphate. Its function is as follows. Catalyzes the attachment of alanine to tRNA(Ala) in a two-step reaction: alanine is first activated by ATP to form Ala-AMP and then transferred to the acceptor end of tRNA(Ala). Also edits incorrectly charged Ser-tRNA(Ala) and Gly-tRNA(Ala) via its editing domain. The polypeptide is Alanine--tRNA ligase (Escherichia coli O9:H4 (strain HS)).